The sequence spans 115 residues: Large ribosomal subunit protein bL19 (115 aa).

Belongs to the bacterial ribosomal protein bL19 family.

Functionally, this protein is located at the 30S-50S ribosomal subunit interface and may play a role in the structure and function of the aminoacyl-tRNA binding site. This is Large ribosomal subunit protein bL19 from Lactobacillus delbrueckii subsp. bulgaricus (strain ATCC BAA-365 / Lb-18).